The chain runs to 426 residues: MALKMDKSKELFEEAKKYLVGGVNSPVRYFKPYPFFVEKAKDCYLFDVDGNCYIDYCLAYGPMVLGHANDAVIKAVKEQLELGSAYGCPTEKEIILAKEVVKRVPCAEMVRFVNSGTEATMSAIRLARGVTGRKKIIKFDGAYHGAHDYVLVKSGSGALTHGHPNSPGIPEETTKNTILIPFNDEDAVKKAINENKDEIACIIVEPIMGNVGCILPKEGYLEFLREITEENDILLIFDEVITGFRLAKGGAQEYFGVVPDIATLGKILGGGFPIGAIVGRRELMEQFSPLGAIYQAGTFNGNPISITAGIATLKQLDDRFYKETARTAKILADTLRELADKHNIKAKVYNIASMFQIYFNDKEVVNYEIAKQSDTEKFMKYFWRLLEKGVFVPPSQFECCFTSIKHDDEVVDKTIKAMEDVFEGLE.

At K266 the chain carries N6-(pyridoxal phosphate)lysine.

The protein belongs to the class-III pyridoxal-phosphate-dependent aminotransferase family. HemL subfamily. Requires pyridoxal 5'-phosphate as cofactor.

The protein resides in the cytoplasm. It carries out the reaction (S)-4-amino-5-oxopentanoate = 5-aminolevulinate. It participates in porphyrin-containing compound metabolism; protoporphyrin-IX biosynthesis; 5-aminolevulinate from L-glutamyl-tRNA(Glu): step 2/2. The polypeptide is Glutamate-1-semialdehyde 2,1-aminomutase (hemL) (Methanocaldococcus jannaschii (strain ATCC 43067 / DSM 2661 / JAL-1 / JCM 10045 / NBRC 100440) (Methanococcus jannaschii)).